The primary structure comprises 1184 residues: uncharacterized protein (1184 aa).

Disordered regions lie at residues 115 to 152 (ETSSQPSQEVYHPHAGKAAQSAHVMNSTESRPSSAHVS) and 397 to 426 (TYKPKSSVNGSVYRSKSVKSTTSHNKVPER). Composition is skewed to polar residues over residues 137–152 (HVMNSTESRPSSAHVS) and 397–421 (TYKPKSSVNGSVYRSKSVKSTTSHN). S686 is subject to Phosphoserine. 4 stretches are compositionally biased toward basic and acidic residues: residues 705–767 (LSER…ESAH), 783–792 (FEHETEPSHY), 849–863 (SHAHDNAVNEKRDLG), and 891–902 (YLHDEKTRDTLT). Disordered stretches follow at residues 705-870 (LSER…FGDV) and 890-1017 (DYLH…SSPK). A Phosphoserine modification is found at S905. The segment covering 920 to 932 (EDHPHASEAERAH) has biased composition (basic and acidic residues). Residues 941 to 950 (SSESSPESQS) are compositionally biased toward low complexity. A compositionally biased stretch (basic and acidic residues) spans 999–1011 (PRERLDDNAKEIL). Position 1018 is a phosphoserine (S1018). Disordered regions lie at residues 1029–1107 (NRKD…IGTQ) and 1135–1154 (DVDNVVSGHSNVNGVSKSRP). Residues 1032–1045 (DKAAVKRMLEEDSS) show a composition bias toward basic and acidic residues. The span at 1073–1107 (PAVNNSTKPVAVTSKNGHSRNGSHAAHSNNVIGTQ) shows a compositional bias: polar residues. Positions 1138–1150 (NVVSGHSNVNGVS) are enriched in low complexity.

It localises to the cytoplasm. This is an uncharacterized protein from Schizosaccharomyces pombe (strain 972 / ATCC 24843) (Fission yeast).